We begin with the raw amino-acid sequence, 235 residues long: Adenosine 5'-phosphosulfate reductase (235 aa).

Residues Cys121, Cys122, Cys204, and Cys207 each contribute to the [4Fe-4S] cluster site. Cys230 acts as the Nucleophile; cysteine thiosulfonate intermediate in catalysis.

The protein belongs to the PAPS reductase family. CysH subfamily. It depends on [4Fe-4S] cluster as a cofactor.

The protein resides in the cytoplasm. It catalyses the reaction [thioredoxin]-disulfide + sulfite + AMP + 2 H(+) = adenosine 5'-phosphosulfate + [thioredoxin]-dithiol. It participates in sulfur metabolism; hydrogen sulfide biosynthesis; sulfite from sulfate. Catalyzes the formation of sulfite from adenosine 5'-phosphosulfate (APS) using thioredoxin as an electron donor. This Anoxybacillus flavithermus (strain DSM 21510 / WK1) protein is Adenosine 5'-phosphosulfate reductase.